The primary structure comprises 270 residues: Chymotrypsin-like elastase family member 3A (270 aa).

The or 16 signal peptide spans 1 to 15 (MMLRLLSSLLLVAVA). The propeptide at 16–28 (SGYGPPSSHSSSR) is activation peptide. In terms of domain architecture, Peptidase S1 spans 29-268 (VVHGEDAVPY…FIDWIEETIA (240 aa)). A disulfide bond links Cys58 and Cys74. Catalysis depends on His73, which acts as the Charge relay system. An N-linked (GlcNAc...) asparagine glycan is attached at Asn114. Cys117 and Cys120 are joined by a disulfide. Catalysis depends on Asp123, which acts as the Charge relay system. 3 cysteine pairs are disulfide-bonded: Cys157/Cys223, Cys188/Cys204, and Cys213/Cys244. Residue Ser217 is the Charge relay system of the active site.

This sequence belongs to the peptidase S1 family. Elastase subfamily.

The enzyme catalyses Preferential cleavage: Ala-|-Xaa. Does not hydrolyze elastin.. Efficient protease with alanine specificity but only little elastolytic activity. In Homo sapiens (Human), this protein is Chymotrypsin-like elastase family member 3A (CELA3A).